We begin with the raw amino-acid sequence, 416 residues long: Lysosome-associated membrane glycoprotein 3 (416 aa).

Residues 1–27 (MPRQLSAAAVLFASLAVILHDGSQMRA) form the signal peptide. The Lumenal portion of the chain corresponds to 28-381 (KAFPKTRDYS…NVDECSSDYT (354 aa)). The tract at residues 135-217 (PPTITPPAHT…ASTVPGSTLA (83 aa)) is disordered. Residues 142 to 170 (AHTTGTSSSTVNHTTGNATQPSNQTTLPA) are compositionally biased toward polar residues. The span at 188–208 (PTHAPGTTAAAHNTTRTAAPA) shows a compositional bias: low complexity. Residue N200 is glycosylated (N-linked (GlcNAc...) asparagine). An intrachain disulfide couples C237 to C274. N291 is a glycosylation site (N-linked (GlcNAc...) asparagine). Cysteines 339 and 376 form a disulfide. A helical membrane pass occupies residues 382 to 402 (IVLPVIGAIVVGLCLVGMGVY). Topologically, residues 403–416 (KIRLRCQSSGYQRI) are cytoplasmic.

It belongs to the LAMP family. In terms of assembly, monomer. Interacts with FURIN.

The protein localises to the cell surface. It localises to the lysosome membrane. It is found in the cytoplasmic vesicle membrane. The protein resides in the early endosome membrane. Functionally, lysosomal membrane glycoprotein which plays a role in the unfolded protein response (UPR) that contributes to protein degradation and cell survival during proteasomal dysfunction. Plays a role in the process of fusion of the lysosome with the autophagosome, thereby modulating the autophagic process. Promotes hepatocellular lipogenesis through activation of the PI3K/Akt pathway. May also play a role in dendritic cell function and in adaptive immunity. The protein is Lysosome-associated membrane glycoprotein 3 (LAMP3) of Macaca mulatta (Rhesus macaque).